The primary structure comprises 317 residues: Taste receptor type 2 member 7 (317 aa).

Residues 1–9 (MTDKVQTTL) are Extracellular-facing. Residues 10-30 (LFLAIGEFSVGILGNAFIGLV) traverse the membrane as a helical segment. Over 31–55 (NCMDWVKKRKIASIDLILTSLAISR) the chain is Cytoplasmic. Residues 56–76 (ICLLCVILLDCFMLVLYPDVY) form a helical membrane-spanning segment. The Extracellular segment spans residues 77–94 (ATGKQMRIIDFFWTLTNH). The chain crosses the membrane as a helical span at residues 95–115 (LSIWFATCLSIYYFFKIANFF). The Cytoplasmic segment spans residues 116–128 (HPLFLWMKWRIDR). Residues 129–149 (VISWILLGCMVLSVFINLPAT) form a helical membrane-spanning segment. Residues 150 to 187 (ENLNADFRRCVKAKRKTNLTWSCRVTKAQHASTKLFLN) lie on the Extracellular side of the membrane. An N-linked (GlcNAc...) asparagine glycan is attached at Asn167. A helical transmembrane segment spans residues 188–208 (LVTLLPFSVCLVSFFLLILSL). The Cytoplasmic portion of the chain corresponds to 209–235 (WRHIRRMQLSATGCRDPSTEAHVRALK). Residues 236 to 256 (AVISFLFLFIAYYLSFLIATS) form a helical membrane-spanning segment. Over 257-266 (SYFIPETELA) the chain is Extracellular. A helical membrane pass occupies residues 267-287 (VIFGEFIALIYPSSHSFILIL). At 288 to 317 (GNNKLRRASLKVLWTVMSILKGRKFQQKQI) the chain is on the cytoplasmic side.

This sequence belongs to the G-protein coupled receptor T2R family.

It localises to the membrane. Gustducin-coupled receptor implicated in the perception of bitter compounds in the oral cavity and the gastrointestinal tract. Signals through PLCB2 and the calcium-regulated cation channel TRPM5. This is Taste receptor type 2 member 7 (TAS2R7) from Papio hamadryas (Hamadryas baboon).